Consider the following 680-residue polypeptide: NADPH--cytochrome P450 reductase (680 aa).

Topologically, residues methionine 1–lysine 5 are lumenal. The chain crosses the membrane as a helical span at residues leucine 6–alanine 23. The Cytoplasmic portion of the chain corresponds to lysine 24–tryptophan 680. The Flavodoxin-like domain occupies threonine 60–phenylalanine 204. FMN is bound by residues serine 66–alanine 71, alanine 117–glycine 120, leucine 152–asparagine 161, and aspartate 187. Residues threonine 264–phenylalanine 509 form the FAD-binding FR-type domain. Position 283 (arginine 283) interacts with NADP(+). FAD-binding positions include arginine 439–serine 442, threonine 457–valine 459, and glycine 473–threonine 476. NADP(+)-binding positions include threonine 537, serine 599–arginine 600, lysine 606–glutamine 610, and aspartate 642. Tryptophan 680 serves as a coordination point for FAD.

This sequence belongs to the NADPH--cytochrome P450 reductase family. In the N-terminal section; belongs to the flavodoxin family. The protein in the C-terminal section; belongs to the flavoprotein pyridine nucleotide cytochrome reductase family. It depends on FAD as a cofactor. Requires FMN as cofactor.

It localises to the endoplasmic reticulum membrane. The protein resides in the mitochondrion outer membrane. Its subcellular location is the cell membrane. It catalyses the reaction 2 oxidized [cytochrome P450] + NADPH = 2 reduced [cytochrome P450] + NADP(+) + H(+). In terms of biological role, this enzyme is required for electron transfer from NADP to cytochrome P450 in microsomes. It can also provide electron transfer to heme oxygenase and cytochrome B5. Involved in ergosterol biosynthesis. This Candida tropicalis (Yeast) protein is NADPH--cytochrome P450 reductase.